The primary structure comprises 376 residues: Mitogen-activated protein kinase 4 (376 aa).

Positions 43 to 329 constitute a Protein kinase domain; sequence VPPLRPIGRG…VDEALCHPYL (287 aa). ATP is bound by residues 49 to 57 and K72; that span reads IGRGAYGIV. D169 (proton acceptor) is an active-site residue. A Phosphothreonine modification is found at T201. Positions 201–203 match the TXY motif; the sequence is TEY. Phosphotyrosine is present on Y203.

It belongs to the protein kinase superfamily. CMGC Ser/Thr protein kinase family. MAP kinase subfamily. Interacts with MEKK1, MKK1, MKK2 and MKK6. May form a ternary complex composed of MEKK1 and MKK1/MKK2 and MPK4. Interacts with MKS1 and AP2C1. May form a ternary or larger complex with MKS1 and WRKY25 and/or WRKY33. Interacts with MAP65-1. No interactions with RACK1A, RACK1B or RACK1C. Interacts directly with ASR3 and mediates its phosphorylation. Binds to MEKK2. Interacts with PAT1. Binds to HT1. Dually phosphorylated on Thr-201 and Tyr-203, which activates the enzyme. Autophosphorylated on serine and tyrosine residues. Dephosphorylated by DSPTP1. Phosphorylated by MKK6 in vitro. In terms of tissue distribution, ubiquitous. Expressed in the veins and stomatal guard cells of leaf plates, petioles, stem, roots and flowers.

The protein resides in the cytoplasm. It localises to the nucleus. The protein localises to the cytoskeleton. It catalyses the reaction L-seryl-[protein] + ATP = O-phospho-L-seryl-[protein] + ADP + H(+). It carries out the reaction L-threonyl-[protein] + ATP = O-phospho-L-threonyl-[protein] + ADP + H(+). With respect to regulation, activated by threonine and tyrosine phosphorylation. Activated by the MAP kinase kinases MKK1 and MKK2. Activated in response to touch, wounding, low temperature, low humidity, salt stress and the bacterial elicitors flagellin and harpin. Activated upon Pseudomonas syringae pv. tomato DC3000 infection. Repressed by the protein phosphatase 2C AP2C1. Repressed by DSPTP1-mediated dephosphorylation. Activated by the MAP kinase kinase MKK6 in vitro. In terms of biological role, the ANPs-MKK6-MPK4 module is involved in the regulation of plant cytokinesis during meiosis and mitosis. Essential to promote the progression of cytokinesis and for cellularization (formation of the cell plate) during male-specific meiosis. Involved in cortical microtubules organization and stabilization by regulating the phosphorylation state of microtubule-associated proteins such as MAP65-1. Involved in root hair development process. Negative regulator of systemic acquired resistance (SAR) and salicylic acid- (SA) mediated defense response. Required for jasmonic acid- (JA) mediated defense gene expression. May regulate activity of transcription factor controlling pathogenesis-related (PR) gene expression. Seems to act independently of the SAR regulatory protein NPR1 (Nonexpresser of PR1). Phosphorylates MKS1 and transcription factors WRKY25 and WRKY33. The MEKK1, MKK1/MKK2 and MPK4 function in a signaling pathway that modulates the expression of genes responding to biotic and abiotic stresses and also plays an important role in pathogen defense by negatively regulating innate immunity. Phosphorylates MEKK2 upon treatment with flg22. Involved in stomatal movement regulation by repressing HT1 and HT1-mediated GHR1 phosphorylation. The sequence is that of Mitogen-activated protein kinase 4 from Arabidopsis thaliana (Mouse-ear cress).